Here is a 398-residue protein sequence, read N- to C-terminus: Ethanolaminephosphotransferase 1 (398 aa).

The residue at position 2 (Ala2) is an N-acetylalanine. The next 10 helical transmembrane spans lie at 47-69 (WLAP…LLLT), 84-103 (HVPD…AYTL), 123-145 (LFDH…SIFG), 150-172 (GVSV…LSHW), 179-201 (VLFL…IVTA), 221-243 (LFTA…LNFF), 256-278 (VYEA…VWIL), 291-310 (IFYF…LIVC), 319-341 (TLNW…AATS), and 345-367 (SALL…VQVV). Position 388 (Sec388) is a non-standard amino acid, selenocysteine.

The protein belongs to the CDP-alcohol phosphatidyltransferase class-I family. Mg(2+) serves as cofactor. Mn(2+) is required as a cofactor.

The protein localises to the endoplasmic reticulum membrane. The enzyme catalyses CDP-ethanolamine + a 1,2-diacyl-sn-glycerol = a 1,2-diacyl-sn-glycero-3-phosphoethanolamine + CMP + H(+). The catalysed reaction is 1-O-alkyl-2-acyl-sn-glycerol + CDP-ethanolamine = a 1-O-alkyl-2-acyl-sn-glycero-3-phosphoethanolamine + CMP + H(+). The protein operates within phospholipid metabolism; phosphatidylethanolamine biosynthesis; phosphatidylethanolamine from ethanolamine: step 3/3. In terms of biological role, ethanolaminephosphotransferase that catalyzes the transfer of phosphoethanolamine (PE) from CDP-ethanolamine to lipid acceptors, the final step in the synthesis of PE via the 'Kennedy' pathway. PE is the second most abundant phospholipid of membranes in mammals and is involved in various membrane-related cellular processes. The enzyme is critical for the synthesis of several PE species and also catalyzes the synthesis of plasmanyl-PE, a lipid required for proper myelination and neurodevelopment, from 1-alkyl-2-acylglycerol. This chain is Ethanolaminephosphotransferase 1, found in Mus musculus (Mouse).